A 122-amino-acid polypeptide reads, in one-letter code: Small ribosomal subunit protein uS13 (122 aa).

The tract at residues 95–122 (GLPVRGQRTKTNARTRKGPKKTIAGKKK) is disordered.

This sequence belongs to the universal ribosomal protein uS13 family. Part of the 30S ribosomal subunit. Forms a loose heterodimer with protein S19. Forms two bridges to the 50S subunit in the 70S ribosome.

In terms of biological role, located at the top of the head of the 30S subunit, it contacts several helices of the 16S rRNA. In the 70S ribosome it contacts the 23S rRNA (bridge B1a) and protein L5 of the 50S subunit (bridge B1b), connecting the 2 subunits; these bridges are implicated in subunit movement. Contacts the tRNAs in the A and P-sites. This Corynebacterium glutamicum (strain ATCC 13032 / DSM 20300 / JCM 1318 / BCRC 11384 / CCUG 27702 / LMG 3730 / NBRC 12168 / NCIMB 10025 / NRRL B-2784 / 534) protein is Small ribosomal subunit protein uS13.